The chain runs to 842 residues: MSVKGKGFPLDLGGSFTEDAPRPPVPGEEGELITTDQRPFSHTYYSLKNDGIKNETSTATPRRPDLDLGYEPEGSASPTPPYLKWAESLHSLLDDQDGIHLFRTFLQQENCADLLDFWFACSGFRKLEPNDSKVEKRLKLAKAIYKKYVLDSNGIVSRQIKPATKSFIKDCVLRQQIDPAMFDQAQMEIQSMMEDNTYPVFLKSDIYLEYTTIGGESPKNYSDQSSGSGTGKGPSGYLPTLNEDEEWRCDQGGEHERERECIPSSLFSQKLALDSSSHCAGSNRRLSDGREFRPGTWREPVNPYYVNTGYAGAPVTSANDSEQQSMSSDADTMSLTDSSVDGIPPYRLRKHYRREMQESANANGRGPLPHIPRTYHMPKDIHVDPEKFAAELISRLEGVLRDREAEQKLEERLKRVRAEEEGDDGDVSSGPSVISHKLPSGPPMHHFNSRYSETGCVGMQIRDAHEENPESILDEHVQRVMKTPGCQSPGTGRHSPKSRSPDGHLSKTLPGSLGTMQTGHGKHSSKSTAKVDSGNLHHHKHVYHHVHHHGGVKPKEQIDGESTQRVQTNFPWNVESHNYATKSRNYAESMGMAPNPMDSLAYSGKVSMLSKRNAKKADLGKSESASHEMPVVPEDSERHQKILQWIMEGEKEIIRHKKSNHSSSSAKKQPPTELARPLSIERPGAVHPWVSAQLRNVVQPSHPFIQDPTMPPNPAPNPLTQLVSKPGARLEEEEKKAAKMPQKQRLKPQKKNVSAPSQPCDNIVVAYYFCGEPIPYRTMVKGRVVTLGQFKELLTKKGNYRYYFKKVSDEFDCGVVFEEVREDDMILPIYEEKIIGQVEKID.

Residues 1-75 (MSVKGKGFPL…LDLGYEPEGS (75 aa)) form a disordered region. Residues 34–46 (TTDQRPFSHTYYS) show a composition bias toward polar residues. The RGS domain occupies 88-211 (SLHSLLDDQD…LKSDIYLEYT (124 aa)). 9 disordered regions span residues 218-242 (PKNYSDQSSGSGTGKGPSGYLPTLN), 277-297 (SHCAGSNRRLSDGREFRPGTW), 316-344 (TSANDSEQQSMSSDADTMSLTDSSVDGIP), 414-451 (KRVRAEEEGDDGDVSSGPSVISHKLPSGPPMHHFNSRY), 482-532 (KTPG…AKVD), 543-562 (YHHVHHHGGVKPKEQIDGES), 615-637 (KKADLGKSESASHEMPVVPEDSE), 656-675 (HKKSNHSSSSAKKQPPTELA), and 729-754 (RLEEEEKKAAKMPQKQRLKPQKKNVS). A compositionally biased stretch (polar residues) spans 316–339 (TSANDSEQQSMSSDADTMSLTDSS). The interval 348–433 (LRKHYRREMQ…DGDVSSGPSV (86 aa)) is interaction with GSK3B. The segment at 434-508 (ISHKLPSGPP…RSPDGHLSKT (75 aa)) is interaction with beta-catenin. Basic residues predominate over residues 543–552 (YHHVHHHGGV). Residues 615-626 (KKADLGKSESAS) show a composition bias toward basic and acidic residues. The 83-residue stretch at 760–842 (CDNIVVAYYF…KIIGQVEKID (83 aa)) folds into the DIX domain.

Homodimer. Interacts with hwa; leading to promote the tankyrase-mediated degradation of axin1. In terms of processing, ADP-ribosylated by tankyrase tnks and tnks2. Poly-ADP-ribosylated protein is recognized by rnf146, followed by ubiquitination at 'Lys-48' and subsequent activation of the Wnt signaling pathway. Post-translationally, ubiquitinated by rnf146 when poly-ADP-ribosylated, leading to its degradation and subsequent activation of the Wnt signaling pathway.

It localises to the cytoplasm. Its subcellular location is the nucleus. The protein resides in the membrane. The protein localises to the cell membrane. In terms of biological role, component of the beta-catenin destruction complex required for regulating ctnnb1 levels through phosphorylation and ubiquitination, and modulating Wnt-signaling. Controls dorsoventral patterning via two opposing effects; down-regulates ctnnb1 to inhibit the Wnt signaling pathway and ventralize embryos, but also dorsalizes embryos by activating a Wnt-independent JNK signaling pathway. This Xenopus laevis (African clawed frog) protein is Axin-1 (axin1).